The sequence spans 126 residues: MKIKKLTSYLLGRNYEAQAKLFLQKQGLSFIAANVKVHGGEIDLIMKDKQTWVFIEVRFRKSGQYGDALATITRSKRKKLLHAAAVWLFQRGECFETSSCRFDICAITGQQFEWLQNAFNQNEFTR.

This sequence belongs to the UPF0102 family.

This is UPF0102 protein plu4003 from Photorhabdus laumondii subsp. laumondii (strain DSM 15139 / CIP 105565 / TT01) (Photorhabdus luminescens subsp. laumondii).